We begin with the raw amino-acid sequence, 295 residues long: MTKILGSDLIKRGMAQMQKGGVIMDVVSAEQARIAEAAGAVAVMALERVPSDIRAAGGVARMANTAIVREVMEAVSIPVMAKARIGHIVEARVLEAMGVDYIDESEVLTPADEKFHLLKSDYTVPFVCGCRDLGEALRRIGEGASMLRTKGEPGTGNVVEAVRHLRKVNAQLRKVINMSHDELMTEAKHLGAPFELLLQIKTLGKLPVVNFAAGGIATPADAALMMELGADGVFVGSGIFKSENPEKFAKAIVQATTHYQDYDLIARLSADLGEPMRGLEISELAVQDRMQERGW.

D25 lines the D-ribose 5-phosphate pocket. Catalysis depends on K82, which acts as the Schiff-base intermediate with D-ribose 5-phosphate. G154 is a D-ribose 5-phosphate binding site. Residue R166 coordinates D-glyceraldehyde 3-phosphate. Residues G215 and 236 to 237 (GS) contribute to the D-ribose 5-phosphate site.

Belongs to the PdxS/SNZ family. In the presence of PdxT, forms a dodecamer of heterodimers.

The catalysed reaction is aldehydo-D-ribose 5-phosphate + D-glyceraldehyde 3-phosphate + L-glutamine = pyridoxal 5'-phosphate + L-glutamate + phosphate + 3 H2O + H(+). It participates in cofactor biosynthesis; pyridoxal 5'-phosphate biosynthesis. Catalyzes the formation of pyridoxal 5'-phosphate from ribose 5-phosphate (RBP), glyceraldehyde 3-phosphate (G3P) and ammonia. The ammonia is provided by the PdxT subunit. Can also use ribulose 5-phosphate and dihydroxyacetone phosphate as substrates, resulting from enzyme-catalyzed isomerization of RBP and G3P, respectively. The protein is Pyridoxal 5'-phosphate synthase subunit PdxS of Actinobacillus pleuropneumoniae serotype 3 (strain JL03).